The primary structure comprises 257 residues: Imidazole glycerol phosphate synthase subunit HisF (257 aa).

Active-site residues include aspartate 11 and aspartate 130.

Belongs to the HisA/HisF family. As to quaternary structure, heterodimer of HisH and HisF.

The protein localises to the cytoplasm. It catalyses the reaction 5-[(5-phospho-1-deoxy-D-ribulos-1-ylimino)methylamino]-1-(5-phospho-beta-D-ribosyl)imidazole-4-carboxamide + L-glutamine = D-erythro-1-(imidazol-4-yl)glycerol 3-phosphate + 5-amino-1-(5-phospho-beta-D-ribosyl)imidazole-4-carboxamide + L-glutamate + H(+). It functions in the pathway amino-acid biosynthesis; L-histidine biosynthesis; L-histidine from 5-phospho-alpha-D-ribose 1-diphosphate: step 5/9. Functionally, IGPS catalyzes the conversion of PRFAR and glutamine to IGP, AICAR and glutamate. The HisF subunit catalyzes the cyclization activity that produces IGP and AICAR from PRFAR using the ammonia provided by the HisH subunit. The chain is Imidazole glycerol phosphate synthase subunit HisF from Prochlorococcus marinus (strain SARG / CCMP1375 / SS120).